The sequence spans 652 residues: MSLYNFKKIMVVPPAKDFIDIMLSKTQRKTPTVVHKGYKISRIRAFYTRKVKYTQQNFHDRLSQIIQDFPKLDDVHPFYADLMNVLYDKDHYKLALGQLNTARHLVDNVAKDYVRLLKYGDSLYRCKQLKKAALGRMATIMKRQASNLTYLEQVRQHLSRLPTIDPYSRTIIICGFPNVGKSSFINKITRADVEVQPYAFTTKSLYVGHTDYKYLRWQVIDTPGILDHPLEERNVIEMQAITALAHLRACVLYFMDISEQCGHSLEEQVKLFESIKPLFTNKPLILAINKIDILTPEDLPEERRAIITKLQEDKNIPVMLMSTVQETGVMEVKTEACERLLSYRVDQKMRTKKVDNILNRLHVAMPAPRDDKLRAPCIPEKASARLLQNADKAERKRKLEKEIEEEMGDDYTLDLKKNYSEIPEEERYDIIPEFWQGHNIADYIDADIFDKLEELEREEGLREESGVYKVPDMTMDETLKEIREIAKQIRGKRFELRDEKRLSSRKNKPVIPRNKQPKVRDRSVQKLVSTMEGLGVDMSGSENANFTKSVVDLRRGQVAVGSKKVPMQPLLDKESSAVVRKTGQPLKRAPSRDTLGIKNLAIRKKAQIMAKRDIAKKVTSRGLKGEADRFIGTKMPKHLFSGKRGNGKTDRR.

The OBG-type G domain occupies 169–341 (RTIIICGFPN…VKTEACERLL (173 aa)). Residues 175–182 (GFPNVGKS), 221–225 (DTPGI), and 289–292 (NKID) contribute to the GTP site. A disordered region spans residues 501–521 (RLSSRKNKPVIPRNKQPKVRD).

This sequence belongs to the TRAFAC class OBG-HflX-like GTPase superfamily. OBG GTPase family. NOG subfamily.

It localises to the nucleus. Its subcellular location is the nucleolus. Involved in the biogenesis of the 60S ribosomal subunit. Required for normal assembly of the mitotic spindle. May be involved in both centrosome-dependent and centrosome-independent spindle assembly programs. Acts as a TP53 repressor, preventing TP53 stabilization and cell cycle arrest. This Drosophila melanogaster (Fruit fly) protein is Nucleolar GTP-binding protein 1.